We begin with the raw amino-acid sequence, 190 residues long: Segregation and condensation protein B (190 aa).

The protein belongs to the ScpB family. Homodimer. Homodimerization may be required to stabilize the binding of ScpA to the Smc head domains. Component of a cohesin-like complex composed of ScpA, ScpB and the Smc homodimer, in which ScpA and ScpB bind to the head domain of Smc. The presence of the three proteins is required for the association of the complex with DNA.

The protein localises to the cytoplasm. Its function is as follows. Participates in chromosomal partition during cell division. May act via the formation of a condensin-like complex containing Smc and ScpA that pull DNA away from mid-cell into both cell halves. The chain is Segregation and condensation protein B from Bacillus cereus (strain G9842).